Reading from the N-terminus, the 284-residue chain is MSVASKNLFDLLGEETPAATTTEKKTAASRDKKRSDSPPVPRELVAQSTTSRKRDPNQPTPRERTVNKKADQPRRRRQAPQGNEAFAREGKEARANNAAHPVDATGAPSNRRNARARRGREFDRHSQTGRVDTKKATERGWGDLVNSAANPDVAENEGNTPSGAQTPAAEEENVKTLDEYLSERKSAAKPVGRTVEKLENATKVEKSAPEELFASLKKSASQKKSAAKESKPKKVLLDIEQTFTARPARGGRPNRAPRRGPSETASKTQQAPPTLSETDFPALA.

The interval 1-284 (MSVASKNLFD…LSETDFPALA (284 aa)) is disordered. Residues 22–36 (TEKKTAASRDKKRSD) show a composition bias toward basic and acidic residues. Phosphoserine is present on residues serine 37 and serine 51. Basic and acidic residues-rich tracts occupy residues 52 to 73 (RKRD…ADQP) and 119 to 141 (GREF…ERGW). At threonine 160 the chain carries Phosphothreonine. A Phosphoserine modification is found at serine 162. Position 166 is a phosphothreonine (threonine 166). 2 stretches are compositionally biased toward basic and acidic residues: residues 172–186 (ENVK…ERKS) and 194–209 (TVEK…KSAP). The segment covering 214–224 (ASLKKSASQKK) has biased composition (low complexity). Residues 226 to 237 (AAKESKPKKVLL) are compositionally biased toward basic and acidic residues. Over residues 245–254 (ARPARGGRPN) the composition is skewed to low complexity. The span at 263-277 (ETASKTQQAPPTLSE) shows a compositional bias: polar residues.

This sequence belongs to the STM1 family. As to quaternary structure, associates with mature 80S ribosomes. Binds to the head domain of the 40S ribosomal subunit and prevents mRNA binding by inserting its alpha-helix domain towards the mRNA entry tunnel at the decoding site, where it blocks the binding of tRNA and mRNA at the A- and P-sites. Interacts with eEF2; interaction sequesters eEF2 at the A-site of the ribosome, thereby blocking the interaction sites of the mRNA-tRNA complex, promoting ribosome stabilization and hibernation. Interacts with sad1. Post-translationally, phosphorylation by TORC1 upon nutrient replenishment inhibits STM1 and causes its release from dormant ribosomes.

The protein resides in the cytoplasm. Its function is as follows. Ribosome preservation factor that protect a small pool of nontranslating, vacant ribosomes in cells under nutrient starvation conditions. Under nutrient-limiting conditions, cells reduce ribosome biogenesis and degrade ribosomes via autophagy (ribophagy) or proteasomal degradation. To avoid excessive degradation during starvation, STM1 binds to and protects 80S ribosomes from proteasomal degradation. Under nutrient-sufficient conditions, TORC1 phosphorylates and inhibits STM1 to prevent formation of dormant 80S ribosomes. Acts as an inhibitor of mRNA translation by promoting ribosome hibernation: clamps the two ribosomal subunits, thereby preventing their dissociation, and inhibits translation by excluding mRNA-binding. Acts via its association with eEF2, promoting ribosome stabilization and storage in an inactive state. May also repress translation by preventing association of eEF3 with ribosomes. Binds specifically G4 quadruplex (these are four-stranded right-handed helices, stabilized by guanine base quartets) and purine motif triplex (characterized by a third, antiparallel purine-rich DNA strand located within the major groove of a homopurine stretch of duplex DNA) nucleic acid structures. These structures may be present at telomeres or in rRNAs. Extends chronological lifespan when overexpressed. The protein is Ribosome-associated protein oga1 of Schizosaccharomyces pombe (strain 972 / ATCC 24843) (Fission yeast).